A 189-amino-acid polypeptide reads, in one-letter code: uncharacterized protein (189 aa).

The 174-residue stretch at 1 to 174 folds into the Macro domain; it reads MKCWTLGDRV…GMEKGVREAL (174 aa).

This is an uncharacterized protein from Aeropyrum pernix (strain ATCC 700893 / DSM 11879 / JCM 9820 / NBRC 100138 / K1).